Consider the following 436-residue polypeptide: 3-ketoacyl-CoA thiolase (436 aa).

Cys99 (acyl-thioester intermediate) is an active-site residue. Catalysis depends on proton acceptor residues His392 and Cys422.

This sequence belongs to the thiolase-like superfamily. Thiolase family. As to quaternary structure, heterotetramer of two alpha chains (FadJ) and two beta chains (FadI).

Its subcellular location is the cytoplasm. It catalyses the reaction an acyl-CoA + acetyl-CoA = a 3-oxoacyl-CoA + CoA. It functions in the pathway lipid metabolism; fatty acid beta-oxidation. Its function is as follows. Catalyzes the final step of fatty acid oxidation in which acetyl-CoA is released and the CoA ester of a fatty acid two carbons shorter is formed. This Cronobacter sakazakii (strain ATCC BAA-894) (Enterobacter sakazakii) protein is 3-ketoacyl-CoA thiolase.